A 124-amino-acid chain; its full sequence is Ribonuclease pancreatic (124 aa).

The span at 1-13 (KETAAAKFERQHM) shows a compositional bias: basic and acidic residues. The segment at 1–24 (KETAAAKFERQHMDSSTSSASSSN) is disordered. Residues K7 and R10 each coordinate substrate. The active-site Proton acceptor is the H12. 4 disulfides stabilise this stretch: C26/C84, C40/C95, C58/C110, and C65/C72. Residues 41 to 45 (KPVBT), K66, and R85 contribute to the substrate site. The Proton donor role is filled by H119.

It belongs to the pancreatic ribonuclease family. As to quaternary structure, monomer. Interacts with and forms tight 1:1 complexes with RNH1. Dimerization of two such complexes may occur. Interaction with RNH1 inhibits this protein. Pancreas.

It is found in the secreted. The enzyme catalyses an [RNA] containing cytidine + H2O = an [RNA]-3'-cytidine-3'-phosphate + a 5'-hydroxy-ribonucleotide-3'-[RNA].. It carries out the reaction an [RNA] containing uridine + H2O = an [RNA]-3'-uridine-3'-phosphate + a 5'-hydroxy-ribonucleotide-3'-[RNA].. Its function is as follows. Endonuclease that catalyzes the cleavage of RNA on the 3' side of pyrimidine nucleotides. Acts on single-stranded and double-stranded RNA. This is Ribonuclease pancreatic (RNASE1) from Boselaphus tragocamelus (Nilgai).